Reading from the N-terminus, the 340-residue chain is Fructose-1,6-bisphosphatase class 1 (340 aa).

Positions 107, 126, 128, and 129 each coordinate Mg(2+). Residue asparagine 215 participates in substrate binding. Position 287 (glutamate 287) interacts with Mg(2+).

The protein belongs to the FBPase class 1 family. As to quaternary structure, homotetramer. Mg(2+) serves as cofactor.

The protein localises to the cytoplasm. It carries out the reaction beta-D-fructose 1,6-bisphosphate + H2O = beta-D-fructose 6-phosphate + phosphate. It functions in the pathway carbohydrate biosynthesis; gluconeogenesis. The protein is Fructose-1,6-bisphosphatase class 1 of Brucella anthropi (strain ATCC 49188 / DSM 6882 / CCUG 24695 / JCM 21032 / LMG 3331 / NBRC 15819 / NCTC 12168 / Alc 37) (Ochrobactrum anthropi).